Reading from the N-terminus, the 582-residue chain is Threonine--tRNA ligase (582 aa).

Residues 185 to 478 (DHRKLGKELE…LTEQYGGAFP (294 aa)) are catalytic. Residues Cys-278, His-329, and His-455 each contribute to the Zn(2+) site.

Belongs to the class-II aminoacyl-tRNA synthetase family. As to quaternary structure, homodimer. Requires Zn(2+) as cofactor.

It is found in the cytoplasm. It catalyses the reaction tRNA(Thr) + L-threonine + ATP = L-threonyl-tRNA(Thr) + AMP + diphosphate + H(+). Catalyzes the attachment of threonine to tRNA(Thr) in a two-step reaction: L-threonine is first activated by ATP to form Thr-AMP and then transferred to the acceptor end of tRNA(Thr). Also edits incorrectly charged L-seryl-tRNA(Thr). This chain is Threonine--tRNA ligase, found in Dehalococcoides mccartyi (strain CBDB1).